Reading from the N-terminus, the 444-residue chain is Chromosome partition protein MukF (444 aa).

The interval 212–240 is leucine-zipper; the sequence is LDETSGNLRELQDTLNAAGDKLQAQLLRI.

It belongs to the MukF family. Interacts, and probably forms a ternary complex, with MukE and MukB via its C-terminal region. The complex formation is stimulated by calcium or magnesium. It is required for an interaction between MukE and MukB.

The protein localises to the cytoplasm. Its subcellular location is the nucleoid. Functionally, involved in chromosome condensation, segregation and cell cycle progression. May participate in facilitating chromosome segregation by condensation DNA from both sides of a centrally located replisome during cell division. Not required for mini-F plasmid partitioning. Probably acts via its interaction with MukB and MukE. Overexpression results in anucleate cells. It has a calcium binding activity. The sequence is that of Chromosome partition protein MukF from Haemophilus influenzae (strain ATCC 51907 / DSM 11121 / KW20 / Rd).